The following is a 303-amino-acid chain: Methionyl-tRNA formyltransferase (303 aa).

110–113 (SLLP) serves as a coordination point for (6S)-5,6,7,8-tetrahydrofolate.

Belongs to the Fmt family.

The enzyme catalyses L-methionyl-tRNA(fMet) + (6R)-10-formyltetrahydrofolate = N-formyl-L-methionyl-tRNA(fMet) + (6S)-5,6,7,8-tetrahydrofolate + H(+). In terms of biological role, attaches a formyl group to the free amino group of methionyl-tRNA(fMet). The formyl group appears to play a dual role in the initiator identity of N-formylmethionyl-tRNA by promoting its recognition by IF2 and preventing the misappropriation of this tRNA by the elongation apparatus. The protein is Methionyl-tRNA formyltransferase of Ehrlichia ruminantium (strain Gardel).